The sequence spans 585 residues: Eukaryotic translation initiation factor 3 subunit D (585 aa).

A compositionally biased stretch (gly residues) spans G110–A130. Residues G110–A152 form a disordered region. The interval S300–P314 is RNA gate. Residues V560 to E585 form a disordered region. Residues F565–E585 are compositionally biased toward acidic residues.

It belongs to the eIF-3 subunit D family. As to quaternary structure, component of the eukaryotic translation initiation factor 3 (eIF-3) complex.

The protein resides in the cytoplasm. Its function is as follows. mRNA cap-binding component of the eukaryotic translation initiation factor 3 (eIF-3) complex, which is involved in protein synthesis of a specialized repertoire of mRNAs and, together with other initiation factors, stimulates binding of mRNA and methionyl-tRNAi to the 40S ribosome. The eIF-3 complex specifically targets and initiates translation of a subset of mRNAs involved in cell proliferation. In the eIF-3 complex, eif3d specifically recognizes and binds the 7-methylguanosine cap of a subset of mRNAs. The polypeptide is Eukaryotic translation initiation factor 3 subunit D (Aspergillus fumigatus (strain CBS 144.89 / FGSC A1163 / CEA10) (Neosartorya fumigata)).